The chain runs to 508 residues: Photosystem II CP47 reaction center protein (508 aa).

6 helical membrane-spanning segments follow: residues 21–36 (SVHI…WAGS), 101–115 (IMFS…IWHW), 140–156 (GIHL…FGAF), 203–218 (IAAG…FHLS), 237–252 (VLSS…AFIV), and 457–472 (TFAL…HGAR).

The protein belongs to the PsbB/PsbC family. PsbB subfamily. In terms of assembly, PSII is composed of 1 copy each of membrane proteins PsbA, PsbB, PsbC, PsbD, PsbE, PsbF, PsbH, PsbI, PsbJ, PsbK, PsbL, PsbM, PsbT, PsbX, PsbY, PsbZ, Psb30/Ycf12, at least 3 peripheral proteins of the oxygen-evolving complex and a large number of cofactors. It forms dimeric complexes. Binds multiple chlorophylls. PSII binds additional chlorophylls, carotenoids and specific lipids. serves as cofactor.

The protein localises to the plastid. It localises to the chloroplast thylakoid membrane. One of the components of the core complex of photosystem II (PSII). It binds chlorophyll and helps catalyze the primary light-induced photochemical processes of PSII. PSII is a light-driven water:plastoquinone oxidoreductase, using light energy to abstract electrons from H(2)O, generating O(2) and a proton gradient subsequently used for ATP formation. In Pinus koraiensis (Korean pine), this protein is Photosystem II CP47 reaction center protein.